Here is a 44-residue protein sequence, read N- to C-terminus: Omega-plectoxin-Pt1a (44 aa).

5 disulfide bridges follow: Cys3–Cys17, Cys10–Cys23, Cys16–Cys35, Cys20–Cys42, and Cys25–Cys33. Threonine amide is present on Thr44. Residue Thr44 is the site of O-palmitoyl threonine attachment.

It belongs to the neurotoxin 02 (plectoxin) family. 02 (plectoxin) subfamily. Contains 5 disulfide bonds. In terms of processing, acylation by palmitate is required for biological activity. As to expression, expressed by the venom gland.

The protein resides in the secreted. Toxin that inhibits presynaptic voltage-gated calcium channel (Cav) in Drosophila nerve terminals, most likely through specific block of the Cav2 channel (known as Dmca1A). The polypeptide is Omega-plectoxin-Pt1a (Plectreurys tristis (Spider)).